Here is a 164-residue protein sequence, read N- to C-terminus: Transcription elongation factor GreA (164 aa).

Residues 50–75 are a coiled coil; it reads YHAAREEQGQQEARIRQLQDLLNIAK.

Belongs to the GreA/GreB family.

Necessary for efficient RNA polymerase transcription elongation past template-encoded arresting sites. The arresting sites in DNA have the property of trapping a certain fraction of elongating RNA polymerases that pass through, resulting in locked ternary complexes. Cleavage of the nascent transcript by cleavage factors such as GreA or GreB allows the resumption of elongation from the new 3'terminus. GreA releases sequences of 2 to 3 nucleotides. This chain is Transcription elongation factor GreA, found in Mycobacterium leprae (strain Br4923).